The primary structure comprises 149 residues: Large ribosomal subunit protein bL9 (149 aa).

The protein belongs to the bacterial ribosomal protein bL9 family.

Functionally, binds to the 23S rRNA. The protein is Large ribosomal subunit protein bL9 of Endomicrobium trichonymphae.